The sequence spans 247 residues: ATP synthase subunit a, chloroplastic (247 aa).

Helical transmembrane passes span 38-58 (QVLI…TIAV), 95-115 (VPFI…GALL), 134-154 (INTT…AGLT), 199-219 (LVVV…VMFL), and 220-240 (GLFT…AYIG).

It belongs to the ATPase A chain family. In terms of assembly, F-type ATPases have 2 components, CF(1) - the catalytic core - and CF(0) - the membrane proton channel. CF(1) has five subunits: alpha(3), beta(3), gamma(1), delta(1), epsilon(1). CF(0) has four main subunits: a, b, b' and c.

It is found in the plastid. The protein localises to the chloroplast thylakoid membrane. In terms of biological role, key component of the proton channel; it plays a direct role in the translocation of protons across the membrane. In Buxus microphylla (Littleleaf boxwood), this protein is ATP synthase subunit a, chloroplastic.